Consider the following 297-residue polypeptide: Acetyl-coenzyme A carboxylase carboxyl transferase subunit beta (297 aa).

The CoA carboxyltransferase N-terminal domain maps to 27–296; the sequence is LWHKCPSCEA…PEEAREAAAV (270 aa). Positions 31, 34, 50, and 53 each coordinate Zn(2+). A C4-type zinc finger spans residues 31-53; the sequence is CPSCEAVLYRPELEKTLDVCPKC.

The protein belongs to the AccD/PCCB family. As to quaternary structure, acetyl-CoA carboxylase is a heterohexamer composed of biotin carboxyl carrier protein (AccB), biotin carboxylase (AccC) and two subunits each of ACCase subunit alpha (AccA) and ACCase subunit beta (AccD). The cofactor is Zn(2+).

It is found in the cytoplasm. It catalyses the reaction N(6)-carboxybiotinyl-L-lysyl-[protein] + acetyl-CoA = N(6)-biotinyl-L-lysyl-[protein] + malonyl-CoA. It functions in the pathway lipid metabolism; malonyl-CoA biosynthesis; malonyl-CoA from acetyl-CoA: step 1/1. Component of the acetyl coenzyme A carboxylase (ACC) complex. Biotin carboxylase (BC) catalyzes the carboxylation of biotin on its carrier protein (BCCP) and then the CO(2) group is transferred by the transcarboxylase to acetyl-CoA to form malonyl-CoA. This is Acetyl-coenzyme A carboxylase carboxyl transferase subunit beta from Pseudomonas putida (strain ATCC 700007 / DSM 6899 / JCM 31910 / BCRC 17059 / LMG 24140 / F1).